Consider the following 313-residue polypeptide: MPTPKAFALLGPTAGGKTALALKIAETLPVEIISLDSALVYTGMDIGTAKPSASERAFVPHHLIDIITPVQTYSAARFVEDCTRLVGEISSRGRFALIVGGTMMYFRALTQGLNDLPEADACLRADLDEQKQMYGLDFLYRTLQQVDPETACRLKPNDSQRIGRALEVYYLTGKPMSTHLGSPTSHTLPFDLHTAALIPENRARLHENIALRFHLMLEQGFIGEVENLRRLYPSLTADSPAIRCVGYRQAWEYLDGKTDFPAFVEKGIAATRQLAKRQLTWLRKTPLDCVTDPFSDGNSCTRLIEAAKRFFGA.

11–18 lines the ATP pocket; sequence GPTAGGKT. Position 13–18 (13–18) interacts with substrate; that stretch reads TAGGKT. Interaction with substrate tRNA regions lie at residues 36-39, 160-164, and 243-248; these read DSAL, QRIGR, and RCVGYR.

This sequence belongs to the IPP transferase family. Monomer. Mg(2+) is required as a cofactor.

It catalyses the reaction adenosine(37) in tRNA + dimethylallyl diphosphate = N(6)-dimethylallyladenosine(37) in tRNA + diphosphate. Catalyzes the transfer of a dimethylallyl group onto the adenine at position 37 in tRNAs that read codons beginning with uridine, leading to the formation of N6-(dimethylallyl)adenosine (i(6)A). This chain is tRNA dimethylallyltransferase, found in Neisseria meningitidis serogroup C / serotype 2a (strain ATCC 700532 / DSM 15464 / FAM18).